Reading from the N-terminus, the 229-residue chain is Deleted in azoospermia-like (229 aa).

The RRM domain maps to 47-128 (NTLFVGGIDM…PAIMKERSSR (82 aa)). Residues 172-198 (PYSYSSPPGIMVPQVPMNYAQTTYAYQ) form the DAZ domain.

This sequence belongs to the RRM DAZ family. As to expression, testis and ovary specific. In ovary, it is localized in the cortex of oocytes. At the onset of embryogenesis, maternal product is located at the vegetal pole, before migrating toward blastomeres through cytoplasmic streams as early embryogenesis proceededs.

The protein localises to the cytoplasm. RNA-binding protein involved in gametogenesis in both males and females. Acts by binding to the 3'-UTR of mRNA, specifically recognizing GUU triplets, and promoting the translation of key transcripts. Establishes oocyte polarity through interaction with Bucky ball (BUC). Interacts with Bucky ball (BUC) mRNA to mediate Balbiani body formation and oocyte polarity during early oogenesis. The sequence is that of Deleted in azoospermia-like (dazl) from Danio rerio (Zebrafish).